Consider the following 335-residue polypeptide: Cytoskeleton protein RodZ (335 aa).

The Cytoplasmic portion of the chain corresponds to 1–111 (MNTEATHDQN…LGKRRKKRDG (111 aa)). Positions 19–71 (LRNAREQLGLSQQAVAERLCLKVSTVRDIEEDKAPADLASTFLRGYIRSYARL) constitute an HTH cro/C1-type domain. A DNA-binding region (H-T-H motif) is located at residues 30–49 (QQAVAERLCLKVSTVRDIEE). The helical; Signal-anchor for type II membrane protein transmembrane segment at 112 to 132 (WLMTFTWLVLFVVIGLSGAWW) threads the bilayer. Residues 133–335 (WQDHKAQQEE…TLNAEQSPAQ (203 aa)) are Periplasmic-facing. Over residues 148-164 (DQSSAELNNNQSQSVPL) the composition is skewed to polar residues. The interval 148 to 239 (DQSSAELNNN…PDGAAPLPTD (92 aa)) is disordered. Low complexity-rich tracts occupy residues 165–205 (DTST…DPQQ) and 217–239 (DTAA…LPTD).

This sequence belongs to the RodZ family.

It localises to the cell inner membrane. In terms of biological role, cytoskeletal protein that is involved in cell-shape control through regulation of the length of the long axis. The sequence is that of Cytoskeleton protein RodZ from Escherichia coli O6:K15:H31 (strain 536 / UPEC).